Consider the following 192-residue polypeptide: Probable nicotinate-nucleotide adenylyltransferase (192 aa).

Belongs to the NadD family.

The catalysed reaction is nicotinate beta-D-ribonucleotide + ATP + H(+) = deamido-NAD(+) + diphosphate. It functions in the pathway cofactor biosynthesis; NAD(+) biosynthesis; deamido-NAD(+) from nicotinate D-ribonucleotide: step 1/1. In terms of biological role, catalyzes the reversible adenylation of nicotinate mononucleotide (NaMN) to nicotinic acid adenine dinucleotide (NaAD). The protein is Probable nicotinate-nucleotide adenylyltransferase of Rhizobium etli (strain ATCC 51251 / DSM 11541 / JCM 21823 / NBRC 15573 / CFN 42).